The following is a 356-amino-acid chain: 3-dehydroquinate synthase (356 aa).

NAD(+) contacts are provided by residues 106–110, 130–131, lysine 143, and lysine 152; these read GVVGD and TT. Zn(2+) is bound by residues glutamate 185, histidine 248, and histidine 265.

The protein belongs to the sugar phosphate cyclases superfamily. Dehydroquinate synthase family. Requires NAD(+) as cofactor. It depends on Co(2+) as a cofactor. The cofactor is Zn(2+).

The protein resides in the cytoplasm. It carries out the reaction 7-phospho-2-dehydro-3-deoxy-D-arabino-heptonate = 3-dehydroquinate + phosphate. It participates in metabolic intermediate biosynthesis; chorismate biosynthesis; chorismate from D-erythrose 4-phosphate and phosphoenolpyruvate: step 2/7. Its function is as follows. Catalyzes the conversion of 3-deoxy-D-arabino-heptulosonate 7-phosphate (DAHP) to dehydroquinate (DHQ). The sequence is that of 3-dehydroquinate synthase from Caldanaerobacter subterraneus subsp. tengcongensis (strain DSM 15242 / JCM 11007 / NBRC 100824 / MB4) (Thermoanaerobacter tengcongensis).